We begin with the raw amino-acid sequence, 199 residues long: Probable nicotinate-nucleotide adenylyltransferase (199 aa).

The protein belongs to the NadD family.

It catalyses the reaction nicotinate beta-D-ribonucleotide + ATP + H(+) = deamido-NAD(+) + diphosphate. The protein operates within cofactor biosynthesis; NAD(+) biosynthesis; deamido-NAD(+) from nicotinate D-ribonucleotide: step 1/1. Functionally, catalyzes the reversible adenylation of nicotinate mononucleotide (NaMN) to nicotinic acid adenine dinucleotide (NaAD). In Leptospira interrogans serogroup Icterohaemorrhagiae serovar copenhageni (strain Fiocruz L1-130), this protein is Probable nicotinate-nucleotide adenylyltransferase.